The following is a 210-amino-acid chain: Probable GTP-binding protein EngB (210 aa).

In terms of domain architecture, EngB-type G spans 25–199 (RGIEVAFAGR…RQKLDSWFSE (175 aa)). GTP is bound by residues 33–40 (GRSNAGKS), 60–64 (GRTQL), 78–81 (DLPG), 145–148 (TKAD), and 178–180 (FSS). 2 residues coordinate Mg(2+): Ser-40 and Thr-62.

It belongs to the TRAFAC class TrmE-Era-EngA-EngB-Septin-like GTPase superfamily. EngB GTPase family. The cofactor is Mg(2+).

In terms of biological role, necessary for normal cell division and for the maintenance of normal septation. In Salmonella paratyphi B (strain ATCC BAA-1250 / SPB7), this protein is Probable GTP-binding protein EngB.